A 198-amino-acid polypeptide reads, in one-letter code: GTP cyclohydrolase-2 (198 aa).

GTP is bound at residue 52–56; the sequence is RMHSE. Residues Cys57, Cys68, and Cys70 each contribute to the Zn(2+) site. GTP is bound by residues Gln73, 94–96, and Thr116; that span reads EGR. Catalysis depends on Asp128, which acts as the Proton acceptor. Arg130 acts as the Nucleophile in catalysis. GTP contacts are provided by Thr151 and Lys156.

This sequence belongs to the GTP cyclohydrolase II family. Requires Zn(2+) as cofactor.

It carries out the reaction GTP + 4 H2O = 2,5-diamino-6-hydroxy-4-(5-phosphoribosylamino)-pyrimidine + formate + 2 phosphate + 3 H(+). Its pathway is cofactor biosynthesis; riboflavin biosynthesis; 5-amino-6-(D-ribitylamino)uracil from GTP: step 1/4. Catalyzes the conversion of GTP to 2,5-diamino-6-ribosylamino-4(3H)-pyrimidinone 5'-phosphate (DARP), formate and pyrophosphate. The chain is GTP cyclohydrolase-2 from Vibrio vulnificus (strain CMCP6).